A 713-amino-acid chain; its full sequence is MNQELLSVGSKRRRTGGSLRGNASSSQVDEEQMNRVVEEDPQQQPRHQEEEHTARNGELVGADPRPGAQNDSQQGQVEENNNRFVSVDEDSSGNQEEQEEDEEHAGEQEEEEEEEEEEEEEEEMDQESDDFDQSDDSSREDEHTHNSNVTNCTSVVDLPINQLSSPFYTKTTKMKRKLDHGSEVRSFSLGKKPCKVSDYTSTTGLVPCSATPTTFGDLRAANGQGQQRRRITSVQPPTGLQEWLKMFQSWSGPEKLLALDELIDSCEPTQVKHMMQVIEPQFQRDFISLLPKELALYVLSFLEPKDLLQAAQTCRYWRILAEDNLLWREKCKEEGIDEPLHIKRRKIIKPGFIHSPWKSAYIRQHRIDTNWRRGELRSPKVLKGHDDHVITCLQFCGNRIVSGSDDNTLKVWSAVTGKCLRTLVGHTGGVWSSQMRDNIIISGSTDRTLKVWNAETGECIHTLYGHTSTVRCMHLHEKRVVSGSRDATLRVWDIETGQCLHVLMGHVAAVRCVQYDGRRVVSGAYDFMVKVWDPETETCLHTLQGHTNRVYSLQFDGIHVVSGSLDTSIRVWDVETGNCIHTLTGHQSLTSGMELKDNILVSGNADSTVKIWDIKTGQCLQTLQGPSKHQSAVTCLQFNKNFVITSSDDGTVKLWDLKTGEFIRNLVTLESGGSGGVVWRIRASNTKLVCAVGSRNGTEETKLLVLDFDVDMK.

Positions methionine 1–threonine 150 are disordered. Serine 26 carries the phosphoserine modification. The segment covering arginine 46–arginine 55 has biased composition (basic and acidic residues). Residues glutamine 69–phenylalanine 84 show a composition bias toward polar residues. Over residues valine 87–aspartate 135 the composition is skewed to acidic residues. A coiled-coil region spans residues asparagine 94–aspartate 136. The segment covering aspartate 136–histidine 145 has biased composition (basic and acidic residues). Threonine 211 carries the post-translational modification Phosphothreonine. Position 233 is a phosphoserine (serine 233). In terms of domain architecture, F-box spans arginine 284 to lysine 330. WD repeat units follow at residues glycine 384–valine 424, histidine 426–threonine 462, glycine 465–methionine 504, histidine 506–threonine 542, glycine 545–threonine 584, histidine 586–glutamine 624, and lysine 628–asparagine 665.

As to quaternary structure, homodimer; homodimerization plays a role in substrate binding and/or ubiquitination and degradation. Component of the SCF(FBXW7) complex consisting of CUL1, RBX1, SKP1 and FBXW7. Interacts (via F-box domain) with SKP1. Interacts (via F-box domain) with pseudophosphatase STYX; the interaction is direct and prevents FBXW7 interaction with SKP1. Interacts with cyclin-E (CCNE1 or CCNE2). Interacts with PSEN1. Forms a trimeric complex with NOTCH1 and SGK1. Interacts with NOTCH1 intracellular domain/NICD and NOTCH4 intracellular domain/NICD. Interacts with NOTCH2 intracellular domain (N2ICD). Interacts with MYC (when phosphorylated). Interacts with USP28, counteracting ubiquitination of MYC. Interacts (when phosphorylated at Thr-211) with PIN1, disrupting FBXW7 dimerization and promoting FBXW7 autoubiquitination and degradation. Interacts with UBE2QL1. Interacts with FAM83D; promotes FBXW7 degradation. Interacts with MYCN; FBXW7 competes with AURKA for binding to unphosphorylated MYCN but not for binding to phosphorylated MYCN. Interacts with JUN. Found in a complex with JUN and PRR7. Interacts with JUN and PRR7; the interaction inhibits ubiquitination-mediated JUN degradation, promoting its phosphorylation and transcriptional activity. Interacts with NFE2L1. Interacts with NR1D1. Interacts with RICTOR; mediates RICTOR ubiquitination and degradation. Post-translationally, phosphorylation at Thr-211 promotes interaction with PIN1, leading to disrupt FBXW7 dimerization and promoting FBXW7 autoubiquitination and degradation. Phosphorylated by ATM at Ser-26 in response to DNA damage, promoting recruitment to DNA damage sites and 'Lys-63'-linked ubiquitination of phosphorylated XRCC4. Ubiquitinated: autoubiquitinates following phosphorylation at Thr-211 and subsequent interaction with PIN1. Ubiquitination leads to its degradation.

It localises to the nucleus. The protein localises to the nucleoplasm. It is found in the chromosome. It functions in the pathway protein modification; protein ubiquitination. In terms of biological role, substrate recognition component of a SCF (SKP1-CUL1-F-box protein) E3 ubiquitin-protein ligase complex which mediates the ubiquitination and subsequent proteasomal degradation of target proteins. Recognizes and binds phosphorylated sites/phosphodegrons within target proteins and thereafter brings them to the SCF complex for ubiquitination. Identified substrates include cyclin-E (CCNE1 or CCNE2), JUN, MYC, NOTCH1 released notch intracellular domain (NICD), NOTCH2, MCL1, MLST8, RICTOR and probably PSEN1. Acts as a negative regulator of JNK signaling by binding to phosphorylated JUN and promoting its ubiquitination and subsequent degradation. SCF(FBXW7) complex mediates the ubiquitination and subsequent degradation of NFE2L1. Involved in bone homeostasis and negative regulation of osteoclast differentiation. Regulates the amplitude of the cyclic expression of hepatic core clock genes and genes involved in lipid and glucose metabolism via ubiquitination and proteasomal degradation of their transcriptional repressor NR1D1; CDK1-dependent phosphorylation of NR1D1 is necessary for SCF(FBXW7)-mediated ubiquitination. Also able to promote 'Lys-63'-linked ubiquitination in response to DNA damage. The SCF(FBXW7) complex facilitates double-strand break repair following phosphorylation by ATM: phosphorylation promotes localization to sites of double-strand breaks and 'Lys-63'-linked ubiquitination of phosphorylated XRCC4, enhancing DNA non-homologous end joining. This chain is F-box/WD repeat-containing protein 7, found in Rattus norvegicus (Rat).